Reading from the N-terminus, the 277-residue chain is Phosphonates import ATP-binding protein PhnC 2 (277 aa).

The 249-residue stretch at isoleucine 5–alanine 253 folds into the ABC transporter domain. Glycine 37–serine 44 provides a ligand contact to ATP.

This sequence belongs to the ABC transporter superfamily. Phosphonates importer (TC 3.A.1.9.1) family. As to quaternary structure, the complex is composed of two ATP-binding proteins (PhnC), two transmembrane proteins (PhnE) and a solute-binding protein (PhnD).

The protein resides in the cell inner membrane. The enzyme catalyses phosphonate(out) + ATP + H2O = phosphonate(in) + ADP + phosphate + H(+). Part of the ABC transporter complex PhnCDE involved in phosphonates import. Responsible for energy coupling to the transport system. This Pseudomonas syringae pv. syringae (strain B728a) protein is Phosphonates import ATP-binding protein PhnC 2.